The sequence spans 450 residues: V-type proton ATPase subunit H (450 aa).

Belongs to the V-ATPase H subunit family. In terms of assembly, V-ATPase is a heteromultimeric enzyme composed of a peripheral catalytic V1 complex (components A to H) attached to an integral membrane V0 proton pore complex (components: a, c, c', c'', d, e, f and VOA1).

Its subcellular location is the vacuole membrane. In terms of biological role, subunit of the V1 complex of vacuolar(H+)-ATPase (V-ATPase), a multisubunit enzyme composed of a peripheral complex (V1) that hydrolyzes ATP and a membrane integral complex (V0) that translocates protons. V-ATPase is responsible for acidifying and maintaining the pH of intracellular compartments. This subunit is essential for activity, but not assembly, of the enzyme complex. This subunit is also required for silencing the ATPase activity of V-ATPase when V1 is detached from V0. The polypeptide is V-type proton ATPase subunit H (vma13) (Schizosaccharomyces pombe (strain 972 / ATCC 24843) (Fission yeast)).